A 585-amino-acid chain; its full sequence is Eukaryotic translation initiation factor 3 subunit D (585 aa).

Positions 43–60 (LGRMADWTGDGKDRDRGG) are enriched in basic and acidic residues. Disordered regions lie at residues 43–62 (LGRMADWTGDGKDRDRGGRQ) and 109–152 (RGGG…NRSA). Residues 109–130 (RGGGTVFRGRGQRGVGQRGGRA) show a composition bias toward gly residues. The tract at residues 300-314 (SIDLVTVNENAADAP) is RNA gate. A disordered region spans residues 560–585 (VPPNTFEEDDEAAEEQEEKAEEESEE). The segment covering 565–585 (FEEDDEAAEEQEEKAEEESEE) has biased composition (acidic residues).

The protein belongs to the eIF-3 subunit D family. As to quaternary structure, component of the eukaryotic translation initiation factor 3 (eIF-3) complex.

The protein localises to the cytoplasm. In terms of biological role, mRNA cap-binding component of the eukaryotic translation initiation factor 3 (eIF-3) complex, which is involved in protein synthesis of a specialized repertoire of mRNAs and, together with other initiation factors, stimulates binding of mRNA and methionyl-tRNAi to the 40S ribosome. The eIF-3 complex specifically targets and initiates translation of a subset of mRNAs involved in cell proliferation. In the eIF-3 complex, eif3d specifically recognizes and binds the 7-methylguanosine cap of a subset of mRNAs. This chain is Eukaryotic translation initiation factor 3 subunit D, found in Neosartorya fischeri (strain ATCC 1020 / DSM 3700 / CBS 544.65 / FGSC A1164 / JCM 1740 / NRRL 181 / WB 181) (Aspergillus fischerianus).